The following is a 117-amino-acid chain: NADH dehydrogenase [ubiquinone] 1 beta subcomplex subunit 9 (117 aa).

An N-acetylserine modification is found at S2.

Belongs to the complex I LYR family. In terms of assembly, complex I is composed of at least 49 different subunits. As to expression, expressed in roots, stems, flowers, rosette leaves, cauline leaves and siliques, with the highest expression in the stems.

It localises to the mitochondrion inner membrane. Functionally, accessory subunit of the mitochondrial membrane respiratory chain NADH dehydrogenase (Complex I), that is believed to be not involved in catalysis. Complex I functions in the transfer of electrons from NADH to the respiratory chain. The immediate electron acceptor for the enzyme is believed to be ubiquinone. Is required for correct plant growth and development. The chain is NADH dehydrogenase [ubiquinone] 1 beta subcomplex subunit 9 (CIB22) from Arabidopsis thaliana (Mouse-ear cress).